The chain runs to 549 residues: Frizzled-7-A (549 aa).

The N-terminal stretch at 1–22 (MSSTVSLLFCCLFLQLCPSAQQ) is a signal peptide. The Extracellular portion of the chain corresponds to 23 to 231 (YHGEKGISVP…EEEVRFARLW (209 aa)). The FZ domain occupies 32–151 (PDHGFCQPIS…HGAGEICVGQ (120 aa)). 5 disulfides stabilise this stretch: C37–C98, C45–C91, C82–C119, C108–C148, and C112–C136. N51 carries an N-linked (GlcNAc...) asparagine glycan. A glycan (N-linked (GlcNAc...) asparagine) is linked at N152. Residues 232-252 (VGIWAILCCISTLFTVLTYLV) traverse the membrane as a helical segment. The Cytoplasmic segment spans residues 253–263 (DMRRFSYPERP). A helical transmembrane segment spans residues 264-284 (IIFLSGCYFMVAVAYTAGFLL). Residues 285–311 (EERAVCVERFSEDSYRTVAQGTKKEGC) are Extracellular-facing. A helical membrane pass occupies residues 312–332 (TILFMILYFFGMASSIWWVIL). At 333–354 (SLTWFLSAGMKWGHEAIEANSQ) the chain is on the cytoplasmic side. Residues 355–375 (YFHLAAWAVPAVKTITILAMG) traverse the membrane as a helical segment. Over 376–398 (QVDGDVLSGVCYVGINSVDSLRG) the chain is Extracellular. The chain crosses the membrane as a helical span at residues 399–419 (FVLAPLFVYLFIGTSFLLAGF). Residues 420–445 (VSLFRIRTIMKHDGTKTEKLEKLMVR) lie on the Cytoplasmic side of the membrane. A helical transmembrane segment spans residues 446 to 466 (IGVFSVMYTVPATIVLACYFY). The Extracellular segment spans residues 467 to 503 (EQAFRDTWEKTWLVQTCKGYAVPCPNYNFAPMSPDFT). A helical transmembrane segment spans residues 504 to 524 (VFMIKYLMTMIVGITSSFWIW). The Cytoplasmic portion of the chain corresponds to 525 to 549 (SGKTLQSWRRFYHRLSNGSKGETAV). Positions 527–532 (KTLQSW) match the Lys-Thr-X-X-X-Trp motif, mediates interaction with the PDZ domain of Dvl family members motif. The PDZ-binding motif lies at 547 to 549 (TAV).

It belongs to the G-protein coupled receptor Fz/Smo family. In terms of assembly, interacts with wnt11 and sdc4. The extracellular domain interacts with the extracellular domain of pcdh8/papc. As to expression, expressed in the animal region of cleavage stage embryos. During gastrulation, broadly expressed on the dorsal side of the embryo in deep mesodermal cells surrounding the blastopore lip and in presumptive anterior neuroectoderm. During neurulation, becomes progressively more restricted to the dorsal epidermis, neural plate, and neural tube. Expressed in the cranial neural crest of neurulae and tailbud embryos as well as the pronephros of tailbud embryos. Localized to the brain of neurulae, tailbud embryos and tadpoles. In tadpoles, strongly expressed in the eye and developing heart.

Its subcellular location is the cell membrane. It localises to the endosome membrane. Its function is as follows. Receptor for Wnt proteins. Acts in both canonical and non-canonical Wnt pathways. Although different papers report differing Wnt preferences, wnt5a, wnt8b and wnt11 have been proposed as synergists. In the canonical Wnt pathway, acts via beta-catenin to promote the expression of the dorsal genes siamois, twin and nodal3 and to establish the dorsal axis of the embryo and induce dorsal mesoderm formation. In a non-canonical Wnt/planar cell polarity (PCP) pathway, acts with sdc4 and dvl2/dsh to regulate convergent extension cell movements during gastrulation. Triggers phosphorylation of dvl2/dsh and its translocation to the plasma membrane. In a third branch of Wnt signaling, acts in a non-canonical pathway via trimeric G proteins, and independently of dvl2/dsh, to recruit protein kinase C (PKC) to the membrane and thus activate PKC. PKC signaling controls cell sorting and tissue separation during gastrulation. The chain is Frizzled-7-A (fzd7-a) from Xenopus laevis (African clawed frog).